The following is a 126-amino-acid chain: Small ribosomal subunit protein uS13 (126 aa).

Positions 95-126 are disordered; it reads GLPVRGQRTHTNARTRKGPRKTVAGKKKPGKK.

The protein belongs to the universal ribosomal protein uS13 family. As to quaternary structure, part of the 30S ribosomal subunit. Forms a loose heterodimer with protein S19. Forms two bridges to the 50S subunit in the 70S ribosome.

Functionally, located at the top of the head of the 30S subunit, it contacts several helices of the 16S rRNA. In the 70S ribosome it contacts the 23S rRNA (bridge B1a) and protein L5 of the 50S subunit (bridge B1b), connecting the 2 subunits; these bridges are implicated in subunit movement. Contacts the tRNAs in the A and P-sites. The chain is Small ribosomal subunit protein uS13 from Acidothermus cellulolyticus (strain ATCC 43068 / DSM 8971 / 11B).